The following is a 207-amino-acid chain: Casparian strip membrane protein 1 (207 aa).

Residues 1 to 12 (MEADSTTINVTE) show a composition bias toward polar residues. Positions 1–20 (MEADSTTINVTETPKERKGK) are disordered. The Cytoplasmic portion of the chain corresponds to 1 to 48 (MEADSTTINVTETPKERKGKAPLLAAPPASSGVKRVLQKAPKGGYKRG). Residues 49–69 (LAVFDVVLRLAGIATALGAAI) form a helical membrane-spanning segment. Residues 70–98 (AMGSTDQTLPFFTQFFQFKAEFDDLPAFT) lie on the Extracellular side of the membrane. A helical membrane pass occupies residues 99-119 (FFVIANAITAAYLALTIPISI). Residues 120–131 (VCIIRPHLVAPR) lie on the Cytoplasmic side of the membrane. The helical transmembrane segment at 132–152 (VLLIFLDTVMVALTTAAAGGT) threads the bilayer. The Extracellular segment spans residues 153–184 (ASIVYLAHNGNSDANWPAICQQFNDXCQKVSG). A helical membrane pass occupies residues 185 to 205 (AVVASFLTVVVLMLLIVLSAF). Topologically, residues 206–207 (AL) are cytoplasmic.

This sequence belongs to the Casparian strip membrane proteins (CASP) family. Homodimer and heterodimers.

It is found in the cell membrane. Functionally, regulates membrane-cell wall junctions and localized cell wall deposition. Required for establishment of the Casparian strip membrane domain (CSD) and the subsequent formation of Casparian strips, a cell wall modification of the root endodermis that determines an apoplastic barrier between the intraorganismal apoplasm and the extraorganismal apoplasm and prevents lateral diffusion. In Cynara cardunculus var. scolymus (Globe artichoke), this protein is Casparian strip membrane protein 1.